Here is a 423-residue protein sequence, read N- to C-terminus: Guanine nucleotide-binding protein subunit beta (423 aa).

7 WD repeats span residues 90–120 (GHNN…LIWD), 132–162 (LDSQ…TIYR), 179–208 (GHTC…ALWD), 220–256 (DHLG…YIWD), 268–298 (VNDS…NMYD), 348–377 (DNQG…VVWD), and 389–419 (GHGG…KIWS).

It belongs to the WD repeat G protein beta family. In terms of assembly, g proteins are composed of 3 units, alpha, beta and gamma. The beta-gamma subunit complex (STE4-STE18 complex) interacts with PLP1 and PLP2. Interacts with SYG1.

Functionally, implicated in the a- and alpha-factor response pathway. The beta and gamma chains of the putative yeast mating response pathway G protein play a positive role in initiation of the mating response. The beta and gamma chains are required for the GTPase activity, for replacement of GDP by GTP, and for G protein-effector interaction. In Saccharomyces cerevisiae (strain ATCC 204508 / S288c) (Baker's yeast), this protein is Guanine nucleotide-binding protein subunit beta (STE4).